The primary structure comprises 160 residues: Cyclic pyranopterin monophosphate synthase (160 aa).

Substrate is bound by residues 77 to 79 (LCH) and 114 to 115 (ME). The active site involves D129.

The protein belongs to the MoaC family. As to quaternary structure, homohexamer; trimer of dimers.

The enzyme catalyses (8S)-3',8-cyclo-7,8-dihydroguanosine 5'-triphosphate = cyclic pyranopterin phosphate + diphosphate. It participates in cofactor biosynthesis; molybdopterin biosynthesis. Its function is as follows. Catalyzes the conversion of (8S)-3',8-cyclo-7,8-dihydroguanosine 5'-triphosphate to cyclic pyranopterin monophosphate (cPMP). The sequence is that of Cyclic pyranopterin monophosphate synthase from Alcanivorax borkumensis (strain ATCC 700651 / DSM 11573 / NCIMB 13689 / SK2).